A 349-amino-acid chain; its full sequence is Cytoplasmic tRNA 2-thiolation protein 2 (349 aa).

The protein belongs to the CTU2/NCS2 family.

The protein localises to the cytoplasm. The protein operates within tRNA modification; 5-methoxycarbonylmethyl-2-thiouridine-tRNA biosynthesis. Functionally, plays a central role in 2-thiolation of mcm(5)S(2)U at tRNA wobble positions of tRNA(Lys), tRNA(Glu) and tRNA(Gln). May act by forming a heterodimer with tut-1/ctu-1 that ligates sulfur from thiocarboxylated urm-1 onto the uridine of tRNAs at wobble position. The polypeptide is Cytoplasmic tRNA 2-thiolation protein 2 (Caenorhabditis briggsae).